We begin with the raw amino-acid sequence, 369 residues long: Serine/threonine-protein phosphatase PP2A-1 catalytic subunit (369 aa).

The interval 1–57 (MDTDLDVPMQDAVTEQLTPTVSEDMDLNNNSSDNNAEEFSVDDLKPGSSGIADHKSS) is disordered. Positions 117, 119, 145, and 177 each coordinate Mn(2+). Histidine 178 functions as the Proton donor in the catalytic mechanism. Mn(2+)-binding residues include histidine 227 and histidine 301. Residues 348–369 (QYDPSVRPGEPSVSRKTPDYFL) form a disordered region. Leucine 369 bears the Leucine methyl ester mark.

Belongs to the PPP phosphatase family. PP-2A subfamily. In terms of assembly, inactivated in a complex with phosphatase methylesterase PPE1 (PP2Ai). Interacts with phosphatase 2A activator RRD2, which can reactivate PP2Ai by dissociating the catalytic subunit from the complex. Forms a ternary complex with RRD2-TAP42. The cofactor is Mn(2+). Reversibly methyl esterified on Leu-369 by leucine carboxyl methyltransferase 1 (PPM1) and protein phosphatase methylesterase 1 (PPE1). Carboxyl methylation influences the affinity of the catalytic subunit for the different regulatory subunits, thereby modulating the PP2A holoenzyme's substrate specificity, enzyme activity and cellular localization.

It carries out the reaction O-phospho-L-seryl-[protein] + H2O = L-seryl-[protein] + phosphate. The catalysed reaction is O-phospho-L-threonyl-[protein] + H2O = L-threonyl-[protein] + phosphate. Exact function not known, phosphatase 2A performs an essential cellular function. The sequence is that of Serine/threonine-protein phosphatase PP2A-1 catalytic subunit (PPH21) from Saccharomyces cerevisiae (strain ATCC 204508 / S288c) (Baker's yeast).